A 125-amino-acid chain; its full sequence is Aspartate 1-decarboxylase 2 (125 aa).

The Schiff-base intermediate with substrate; via pyruvic acid role is filled by serine 25. Residue serine 25 is modified to Pyruvic acid (Ser). Substrate is bound at residue threonine 57. Residue tyrosine 58 is the Proton donor of the active site. 73 to 75 (GAA) lines the substrate pocket.

The protein belongs to the PanD family. Heterooctamer of four alpha and four beta subunits. The cofactor is pyruvate. Is synthesized initially as an inactive proenzyme, which is activated by self-cleavage at a specific serine bond to produce a beta-subunit with a hydroxyl group at its C-terminus and an alpha-subunit with a pyruvoyl group at its N-terminus.

It localises to the cytoplasm. The enzyme catalyses L-aspartate + H(+) = beta-alanine + CO2. It participates in cofactor biosynthesis; (R)-pantothenate biosynthesis; beta-alanine from L-aspartate: step 1/1. Functionally, catalyzes the pyruvoyl-dependent decarboxylation of aspartate to produce beta-alanine. This Gloeobacter violaceus (strain ATCC 29082 / PCC 7421) protein is Aspartate 1-decarboxylase 2.